The sequence spans 126 residues: Small ribosomal subunit protein uS12 (126 aa).

A disordered region spans residues 1–26 (MPTINQLVRKGRASETTKSKSPALQD). D89 is modified (3-methylthioaspartic acid). The tract at residues 101-126 (SLDTQGVKDRKQARSKYGAKRAKAAK) is disordered. Residues 113–126 (ARSKYGAKRAKAAK) are compositionally biased toward basic residues.

It belongs to the universal ribosomal protein uS12 family. As to quaternary structure, part of the 30S ribosomal subunit. Contacts proteins S8 and S17. May interact with IF1 in the 30S initiation complex.

Its function is as follows. With S4 and S5 plays an important role in translational accuracy. In terms of biological role, interacts with and stabilizes bases of the 16S rRNA that are involved in tRNA selection in the A site and with the mRNA backbone. Located at the interface of the 30S and 50S subunits, it traverses the body of the 30S subunit contacting proteins on the other side and probably holding the rRNA structure together. The combined cluster of proteins S8, S12 and S17 appears to hold together the shoulder and platform of the 30S subunit. This chain is Small ribosomal subunit protein uS12, found in Burkholderia pseudomallei (strain 1106a).